We begin with the raw amino-acid sequence, 605 residues long: Capsid scaffolding protein (605 aa).

Catalysis depends on charge relay system residues histidine 48, serine 116, and histidine 139. Residues 235 to 275 (ASDAPDLQKPDKALQSPPPASTDPDTMLSGNAGEGATACGG) form a disordered region. The tract at residues 281-300 (QDLISVPRNTFMTLLQTNLD) is interaction with pAP. Disordered stretches follow at residues 403–432 (DYVPAPSRSNKRKRDPEEDEEGGGLFPGED) and 489–588 (PHQS…KSVS). The Nuclear localization signal motif lies at 410 to 416 (RSNKRKR). Over residues 568 to 579 (ASASGVAQSKEP) the composition is skewed to polar residues. Residues 585–605 (KSVSAHLKSIFCEELLNKRVA) form an interaction with major capsid protein region.

The protein belongs to the herpesviridae capsid scaffolding protein family. As to quaternary structure, homomultimer. Interacts with major capsid protein. In terms of assembly, exists in a monomer-dimer equilibrium with the dimer being the active species. Capsid scaffolding protein is cleaved by assemblin after formation of the spherical procapsid. As a result, the capsid obtains its mature, icosahedral shape. Cleavages occur at two or more sites: release (R-site) and maturation (M-site).

Its subcellular location is the host cytoplasm. It localises to the host nucleus. The catalysed reaction is Cleaves -Ala-|-Ser- and -Ala-|-Ala- bonds in the scaffold protein.. Functionally, acts as a scaffold protein by binding major capsid protein in the cytoplasm, inducing the nuclear localization of both proteins. Multimerizes in the nucleus such as major capsid protein forms the icosahedral T=16 capsid. Autocatalytic cleavage releases the assembly protein, and subsequently abolishes interaction with major capsid protein. Cleavages products are evicted from the capsid before or during DNA packaging. In terms of biological role, protease that plays an essential role in virion assembly within the nucleus. Catalyzes the cleavage of the assembly protein after formation of the spherical procapsid. By that cleavage, the capsid matures and gains its icosahedral shape. The cleavage sites seem to include -Ala-Ser-, -Ala-Ala-, as well as Ala-Thr bonds. Assemblin and cleavages products are evicted from the capsid before or during DNA packaging. Plays a major role in capsid assembly. Acts as a scaffold protein by binding major capsid protein. Multimerizes in the nucleus such as major capsid protein forms the icosahedral T=16 capsid. Cleaved by assemblin after capsid completion. The cleavages products are evicted from the capsid before or during DNA packaging. This is Capsid scaffolding protein from Epstein-Barr virus (strain AG876) (HHV-4).